Reading from the N-terminus, the 121-residue chain is Small ribosomal subunit protein uS11 (121 aa).

It belongs to the universal ribosomal protein uS11 family. Part of the 30S ribosomal subunit. Interacts with proteins S7 and S18. Binds to IF-3.

Located on the platform of the 30S subunit, it bridges several disparate RNA helices of the 16S rRNA. Forms part of the Shine-Dalgarno cleft in the 70S ribosome. This is Small ribosomal subunit protein uS11 from Ureaplasma parvum serovar 3 (strain ATCC 27815 / 27 / NCTC 11736).